The chain runs to 342 residues: Holliday junction branch migration complex subunit RuvB (342 aa).

Positions 1–181 are large ATPase domain (RuvB-L); it reads MENRMVTPFD…FGMLCAMEFY (181 aa). ATP contacts are provided by residues Leu20, Arg21, Gly62, Lys65, Thr66, Thr67, 128-130, Arg171, Tyr181, and Arg218; that span reads EDY. Residue Thr66 coordinates Mg(2+). The interval 182 to 252 is small ATPAse domain (RuvB-S); it reads TDEELMEIVV…GAKAALDLLE (71 aa). Residues 255 to 342 are head domain (RuvB-H); it reads KEGLDKIDNK…KDNQVSIFNK (88 aa). DNA is bound by residues Arg310 and Arg315.

The protein belongs to the RuvB family. As to quaternary structure, homohexamer. Forms an RuvA(8)-RuvB(12)-Holliday junction (HJ) complex. HJ DNA is sandwiched between 2 RuvA tetramers; dsDNA enters through RuvA and exits via RuvB. An RuvB hexamer assembles on each DNA strand where it exits the tetramer. Each RuvB hexamer is contacted by two RuvA subunits (via domain III) on 2 adjacent RuvB subunits; this complex drives branch migration. In the full resolvosome a probable DNA-RuvA(4)-RuvB(12)-RuvC(2) complex forms which resolves the HJ.

It is found in the cytoplasm. The catalysed reaction is ATP + H2O = ADP + phosphate + H(+). In terms of biological role, the RuvA-RuvB-RuvC complex processes Holliday junction (HJ) DNA during genetic recombination and DNA repair, while the RuvA-RuvB complex plays an important role in the rescue of blocked DNA replication forks via replication fork reversal (RFR). RuvA specifically binds to HJ cruciform DNA, conferring on it an open structure. The RuvB hexamer acts as an ATP-dependent pump, pulling dsDNA into and through the RuvAB complex. RuvB forms 2 homohexamers on either side of HJ DNA bound by 1 or 2 RuvA tetramers; 4 subunits per hexamer contact DNA at a time. Coordinated motions by a converter formed by DNA-disengaged RuvB subunits stimulates ATP hydrolysis and nucleotide exchange. Immobilization of the converter enables RuvB to convert the ATP-contained energy into a lever motion, pulling 2 nucleotides of DNA out of the RuvA tetramer per ATP hydrolyzed, thus driving DNA branch migration. The RuvB motors rotate together with the DNA substrate, which together with the progressing nucleotide cycle form the mechanistic basis for DNA recombination by continuous HJ branch migration. Branch migration allows RuvC to scan DNA until it finds its consensus sequence, where it cleaves and resolves cruciform DNA. The protein is Holliday junction branch migration complex subunit RuvB of Clostridium botulinum (strain 657 / Type Ba4).